The primary structure comprises 163 residues: Cyclic pyranopterin monophosphate synthase (163 aa).

Residues 74–76 (MCH) and 111–112 (ME) each bind substrate. The active site involves Asp126.

Belongs to the MoaC family. Homohexamer; trimer of dimers.

The catalysed reaction is (8S)-3',8-cyclo-7,8-dihydroguanosine 5'-triphosphate = cyclic pyranopterin phosphate + diphosphate. It functions in the pathway cofactor biosynthesis; molybdopterin biosynthesis. Catalyzes the conversion of (8S)-3',8-cyclo-7,8-dihydroguanosine 5'-triphosphate to cyclic pyranopterin monophosphate (cPMP). The sequence is that of Cyclic pyranopterin monophosphate synthase from Desulfitobacterium hafniense (strain DSM 10664 / DCB-2).